Reading from the N-terminus, the 307-residue chain is Acetaldehyde dehydrogenase 1 (307 aa).

Catalysis depends on cysteine 131, which acts as the Acyl-thioester intermediate. NAD(+)-binding positions include 162–170 (SIGPGTRKN) and asparagine 273.

This sequence belongs to the acetaldehyde dehydrogenase family.

It carries out the reaction acetaldehyde + NAD(+) + CoA = acetyl-CoA + NADH + H(+). The polypeptide is Acetaldehyde dehydrogenase 1 (salG) (Metapseudomonas furukawaii (Pseudomonas furukawaii)).